A 492-amino-acid polypeptide reads, in one-letter code: 2-succinylbenzoate--CoA ligase (492 aa).

It belongs to the ATP-dependent AMP-binding enzyme family. MenE subfamily.

The enzyme catalyses 2-succinylbenzoate + ATP + CoA = 2-succinylbenzoyl-CoA + AMP + diphosphate. The protein operates within quinol/quinone metabolism; 1,4-dihydroxy-2-naphthoate biosynthesis; 1,4-dihydroxy-2-naphthoate from chorismate: step 5/7. Its pathway is quinol/quinone metabolism; menaquinone biosynthesis. Functionally, converts 2-succinylbenzoate (OSB) to 2-succinylbenzoyl-CoA (OSB-CoA). This is 2-succinylbenzoate--CoA ligase from Geobacillus sp. (strain WCH70).